Here is a 137-residue protein sequence, read N- to C-terminus: Ubiquitin-conjugating enzyme variant MMS2 (137 aa).

In terms of domain architecture, UBC core spans 5–137 (PRNFRLLEEL…LRQPKEGETF (133 aa)). Ser-71 is modified (phosphoserine).

The protein belongs to the ubiquitin-conjugating enzyme family. As to quaternary structure, heterodimer with UBC13.

Functionally, has a role in the DNA error-free postreplication repair (PRR) pathway. Lacks catalytic activity by itself. The UBC13/MMS2 heterodimer catalyzes the synthesis of non-canonical poly-ubiquitin chains that are linked through 'Lys-63'. The chain is Ubiquitin-conjugating enzyme variant MMS2 (MMS2) from Saccharomyces cerevisiae (strain ATCC 204508 / S288c) (Baker's yeast).